The sequence spans 142 residues: Large ribosomal subunit protein uL13 (142 aa).

This sequence belongs to the universal ribosomal protein uL13 family. Part of the 50S ribosomal subunit.

This protein is one of the early assembly proteins of the 50S ribosomal subunit, although it is not seen to bind rRNA by itself. It is important during the early stages of 50S assembly. In Pseudomonas fluorescens (strain ATCC BAA-477 / NRRL B-23932 / Pf-5), this protein is Large ribosomal subunit protein uL13.